The sequence spans 476 residues: MVAAPTTATELKLGVDCVIADINQAAFGRKELDIAETEMPGLMALREKYGTEKPLKGARIAGSLHMTIQTACLIETLVELGAEVRWASCNIFSTQDHAAAAIAAQNIPVFAVKGETLEEYWEYTHRILEWGDGGSPNMILDDGGDATGLVMLGSKAEQDITVLDNPSNEEETFLFASIKKKLAQDPTFYSRTKAEIQGVTEETTTGVARLYKMQKSGELPFPAINVNDSVTKSKFDNLYGCRESLVDSIKRATDVMVAGKQALVMGYGDVGKGSAQSLRGLGATVCIAEVDPICALQAAMEGYRVVRLEDVVEEMDIFVTATGNYQVIRNEHLEKMKDEAIVCNIGHFDNEIDVASLKGYEWDNIKPQVDHITLPSGNRIILLAEGRLVNLGCATGHPSFVMSNSFTNQVLAQIELFTKGNEYGKEVYVLPKHLDEMVARLHLDRIGAKLTELSKDQADYINVPVEGPYKPDHYRY.

Substrate-binding residues include Thr67, Asp142, and Glu202. Position 203-205 (203-205 (TTT)) interacts with NAD(+). Residues Lys232 and Asp236 each contribute to the substrate site. NAD(+) is bound by residues Asn237, 266–271 (GYGDVG), Glu289, Asn324, 345–347 (IGH), and Asn390.

Belongs to the adenosylhomocysteinase family. It depends on NAD(+) as a cofactor.

The protein resides in the cytoplasm. It catalyses the reaction S-adenosyl-L-homocysteine + H2O = L-homocysteine + adenosine. It participates in amino-acid biosynthesis; L-homocysteine biosynthesis; L-homocysteine from S-adenosyl-L-homocysteine: step 1/1. May play a key role in the regulation of the intracellular concentration of adenosylhomocysteine. The chain is Adenosylhomocysteinase from Parasynechococcus marenigrum (strain WH8102).